A 64-amino-acid polypeptide reads, in one-letter code: Alpha-like toxin Lqh6 (64 aa).

The LCN-type CS-alpha/beta domain occupies 2–63; that stretch reads RDGYIAQPEN…GIIVDGVKCH (62 aa). 4 disulfides stabilise this stretch: C12/C62, C16/C34, C20/C44, and C24/C46. A Lysine amide modification is found at K64.

It belongs to the long (4 C-C) scorpion toxin superfamily. Sodium channel inhibitor family. Alpha subfamily. As to expression, expressed by the venom gland.

The protein localises to the secreted. Alpha toxins bind voltage-independently at site-3 of sodium channels (Nav) and inhibit the inactivation of the activated channels, thereby blocking neuronal transmission. This toxin is highly toxic to insects and mice, and inhibits the binding of alpha-toxin to cockroach neuronal membranes. The polypeptide is Alpha-like toxin Lqh6 (Leiurus hebraeus (Hebrew deathstalker scorpion)).